The following is an 83-amino-acid chain: U20-theraphotoxin-Cg1a 2 (83 aa).

The first 21 residues, 1 to 21 (MQVSVLITLAVLGVMFVWTSA), serve as a signal peptide directing secretion. Residues 22–47 (AELEERGSDQPAWLKSLERIFQSEER) constitute a propeptide that is removed on maturation. 3 disulfides stabilise this stretch: Cys-49–Cys-63, Cys-56–Cys-68, and Cys-62–Cys-76.

Belongs to the neurotoxin 10 (Hwtx-1) family. 40 (Jztx-35) subfamily. Expressed by the venom gland.

The protein resides in the secreted. Functionally, probable ion channel inhibitor. The sequence is that of U20-theraphotoxin-Cg1a 2 from Chilobrachys guangxiensis (Chinese earth tiger tarantula).